The primary structure comprises 241 residues: Carboxy-S-adenosyl-L-methionine synthase 1 (241 aa).

S-adenosyl-L-methionine-binding positions include Y37, 61–63 (GCS), N131, and R198.

It belongs to the class I-like SAM-binding methyltransferase superfamily. Cx-SAM synthase family. Homodimer.

It carries out the reaction prephenate + S-adenosyl-L-methionine = carboxy-S-adenosyl-L-methionine + 3-phenylpyruvate + H2O. Catalyzes the conversion of S-adenosyl-L-methionine (SAM) to carboxy-S-adenosyl-L-methionine (Cx-SAM). This Yersinia pseudotuberculosis serotype IB (strain PB1/+) protein is Carboxy-S-adenosyl-L-methionine synthase 1.